Reading from the N-terminus, the 205-residue chain is Large ribosomal subunit protein uL3 (205 aa).

The protein belongs to the universal ribosomal protein uL3 family. In terms of assembly, part of the 50S ribosomal subunit. Forms a cluster with proteins L14 and L19.

One of the primary rRNA binding proteins, it binds directly near the 3'-end of the 23S rRNA, where it nucleates assembly of the 50S subunit. The protein is Large ribosomal subunit protein uL3 of Porphyromonas gingivalis (strain ATCC 33277 / DSM 20709 / CIP 103683 / JCM 12257 / NCTC 11834 / 2561).